The primary structure comprises 187 residues: Ribosome-recycling factor (187 aa).

The protein belongs to the RRF family.

Its subcellular location is the cytoplasm. In terms of biological role, responsible for the release of ribosomes from messenger RNA at the termination of protein biosynthesis. May increase the efficiency of translation by recycling ribosomes from one round of translation to another. The polypeptide is Ribosome-recycling factor (Roseobacter denitrificans (strain ATCC 33942 / OCh 114) (Erythrobacter sp. (strain OCh 114))).